Reading from the N-terminus, the 204-residue chain is Large ribosomal subunit protein uL4 (204 aa).

Positions 49-75 (TKGRSDVSGGGKKPWRQKGRGGARAGS) are disordered.

This sequence belongs to the universal ribosomal protein uL4 family. Part of the 50S ribosomal subunit.

One of the primary rRNA binding proteins, this protein initially binds near the 5'-end of the 23S rRNA. It is important during the early stages of 50S assembly. It makes multiple contacts with different domains of the 23S rRNA in the assembled 50S subunit and ribosome. In terms of biological role, forms part of the polypeptide exit tunnel. This is Large ribosomal subunit protein uL4 from Campylobacter lari (strain RM2100 / D67 / ATCC BAA-1060).